The sequence spans 96 residues: Aspartyl/glutamyl-tRNA(Asn/Gln) amidotransferase subunit C (96 aa).

It belongs to the GatC family. Heterotrimer of A, B and C subunits.

The catalysed reaction is L-glutamyl-tRNA(Gln) + L-glutamine + ATP + H2O = L-glutaminyl-tRNA(Gln) + L-glutamate + ADP + phosphate + H(+). It carries out the reaction L-aspartyl-tRNA(Asn) + L-glutamine + ATP + H2O = L-asparaginyl-tRNA(Asn) + L-glutamate + ADP + phosphate + 2 H(+). In terms of biological role, allows the formation of correctly charged Asn-tRNA(Asn) or Gln-tRNA(Gln) through the transamidation of misacylated Asp-tRNA(Asn) or Glu-tRNA(Gln) in organisms which lack either or both of asparaginyl-tRNA or glutaminyl-tRNA synthetases. The reaction takes place in the presence of glutamine and ATP through an activated phospho-Asp-tRNA(Asn) or phospho-Glu-tRNA(Gln). The protein is Aspartyl/glutamyl-tRNA(Asn/Gln) amidotransferase subunit C of Neisseria gonorrhoeae (strain ATCC 700825 / FA 1090).